A 328-amino-acid polypeptide reads, in one-letter code: MSRTVIIGSRDSQLALVQTHWVRDELQRAHPDIRFEIVEMKTQGDKILDVALAKIGDKGLFTKELESAMLEKRTDLAVHSLKDLPTALPPGLILGAITEREDPSDAVIVRRGLEAAGLADLPEGAVVGTSSLRRLAQLKHHYGERLRFQDIRGNLNTRLRKLDEGRYDAIVLAVAGMRRLGWSERISEVLSPDISLHAVGQGALGIECREADGEILDLLTVLNHPPTARRCRAERAMLRALEGGCQVPIGVYTELDDSGRLTLQGIVASLDGRNMARACRSGPGDAPEALGRAVAEDLKAAGAQAILDQIFVLVRSPGVIAPGAAPAS.

S-(dipyrrolylmethanemethyl)cysteine is present on Cys245.

The protein belongs to the HMBS family. Monomer. Dipyrromethane is required as a cofactor.

The enzyme catalyses 4 porphobilinogen + H2O = hydroxymethylbilane + 4 NH4(+). It participates in porphyrin-containing compound metabolism; protoporphyrin-IX biosynthesis; coproporphyrinogen-III from 5-aminolevulinate: step 2/4. Its pathway is porphyrin-containing compound metabolism; chlorophyll biosynthesis. Functionally, tetrapolymerization of the monopyrrole PBG into the hydroxymethylbilane pre-uroporphyrinogen in several discrete steps. The sequence is that of Porphobilinogen deaminase from Gloeobacter violaceus (strain ATCC 29082 / PCC 7421).